A 239-amino-acid chain; its full sequence is Superoxide dismutase [Mn] 3 (239 aa).

The span at 1–19 (ASTQQTPAQSPTASPTVST) shows a compositional bias: polar residues. The interval 1-20 (ASTQQTPAQSPTASPTVSTP) is disordered. The N-terminal stretch at 1-30 (ASTQQTPAQSPTASPTVSTPVAYVDRPLTA) is a signal peptide. Mn(2+)-binding residues include histidine 57, histidine 112, aspartate 195, and histidine 199.

It belongs to the iron/manganese superoxide dismutase family. Homodimer. The cofactor is Mn(2+).

It catalyses the reaction 2 superoxide + 2 H(+) = H2O2 + O2. Functionally, destroys superoxide anion radicals which are normally produced within the cells and which are toxic to biological systems. This Leptolyngbya boryana (Plectonema boryanum) protein is Superoxide dismutase [Mn] 3 (sodA3).